We begin with the raw amino-acid sequence, 124 residues long: uncharacterized protein (124 aa).

This sequence belongs to the asfivirus H124R family.

It is found in the virion. This is an uncharacterized protein from Ornithodoros (relapsing fever ticks).